We begin with the raw amino-acid sequence, 286 residues long: Mitochondrial dicarboxylate carrier (286 aa).

Solcar repeat units lie at residues 7 to 87 (SRWY…MRDY), 100 to 187 (SKVL…AKQL), and 196 to 279 (DNIF…LRKH). Helical transmembrane passes span 9–29 (WYFGGLASCGAACCTHPLDLL), 62–81 (GLSASLCRQMTYSLTRFAIY), and 102–122 (VLLGGISGLTGGFVGTPADLV). At Lys-158 the chain carries N6-acetyllysine. The next 3 membrane-spanning stretches (helical) occupy residues 162–181 (GATMASSRGALVTVGQLSCY), 202–222 (FLSSFIAGGCATFLCQPLDVL), and 254–274 (GLVPAGVRLVPHTVLTFMFLE).

It belongs to the mitochondrial carrier (TC 2.A.29) family. As to expression, expressed most strongly in liver, then kidney, and at lower levels in heart and brain.

It is found in the mitochondrion inner membrane. The enzyme catalyses (S)-malate(in) + phosphate(out) = (S)-malate(out) + phosphate(in). The catalysed reaction is malonate(out) + (S)-malate(in) = malonate(in) + (S)-malate(out). It carries out the reaction (S)-malate(in) + succinate(out) = (S)-malate(out) + succinate(in). It catalyses the reaction (S)-malate(in) + sulfate(out) = (S)-malate(out) + sulfate(in). The enzyme catalyses malonate(out) + phosphate(in) = malonate(in) + phosphate(out). The catalysed reaction is succinate(out) + phosphate(in) = succinate(in) + phosphate(out). It carries out the reaction sulfate(out) + phosphate(in) = sulfate(in) + phosphate(out). It catalyses the reaction malonate(out) + succinate(in) = malonate(in) + succinate(out). Functionally, catalyzes the electroneutral exchange or flux of physiologically important metabolites such as dicarboxylates (malonate, malate, succinate), inorganic sulfur-containing anions, and phosphate, across mitochondrial inner membrane. Plays an important role in gluconeogenesis, fatty acid metabolism, urea synthesis, and sulfur metabolism, particularly in liver, by supplying the substrates for the different metabolic processes. Regulates fatty acid release from adipocytes, and contributes to systemic insulin sensitivity. The protein is Mitochondrial dicarboxylate carrier of Rattus norvegicus (Rat).